The sequence spans 331 residues: Centriolar satellite-associated tubulin polyglutamylase complex regulator 1 (331 aa).

A required for interaction with PCM1 region spans residues 1–111 (MLSPERLALP…HCLLQLLCPD (111 aa)). Positions 1 to 225 (MLSPERLALP…SCPPPALVKE (225 aa)) are required for interaction with TPGS1, LRRC49, and TTLL1. A required for interaction with TPGS2 region spans residues 112–331 (FPLELTQKAA…STEETDESET (220 aa)). A disordered region spans residues 292–331 (SCLPSRTPPRVGSPWKPLHRSRKLDAESDGSTEETDESET). Acidic residues predominate over residues 318 to 331 (ESDGSTEETDESET). Serine 319 is subject to Phosphoserine.

The protein belongs to the CSTPP1 family. In terms of assembly, interacts with PCM1. Interacts with TTLL1, TPGS1, TPGS2 and LRRC49; the interactions link CSTPP1 to the complex TPGC. Binds to alpha-tubulin.

Its subcellular location is the cytoplasm. The protein resides in the cytoskeleton. It is found in the microtubule organizing center. The protein localises to the centrosome. It localises to the centriolar satellite. Regulator of the tubulin polyglutamylase complex (TPGC) that controls cytoskeletal organization, nuclear shape, and cilium disassembly by balancing microtubule and actin assembly. Regulates the assembly and stability of the TPGC and thereby modulates polyglutamylation of the microtubule, which antagonizes MAP4 binding. The protein is Centriolar satellite-associated tubulin polyglutamylase complex regulator 1 of Mus musculus (Mouse).